We begin with the raw amino-acid sequence, 622 residues long: Phosphomethylpyrimidine synthase (622 aa).

Positions 109–130 are disordered; that stretch reads EPISNNNNDRQSSDKQLSFTTN. Residues Asn234, Met263, Tyr292, His328, 348–350, 389–392, and Glu428 each bind substrate; these read SRG and DGLR. His432 lines the Zn(2+) pocket. Tyr455 provides a ligand contact to substrate. Residue His496 participates in Zn(2+) binding. Residues Cys576, Cys579, and Cys584 each contribute to the [4Fe-4S] cluster site.

It belongs to the ThiC family. Homodimer. The cofactor is [4Fe-4S] cluster.

The catalysed reaction is 5-amino-1-(5-phospho-beta-D-ribosyl)imidazole + S-adenosyl-L-methionine = 4-amino-2-methyl-5-(phosphooxymethyl)pyrimidine + CO + 5'-deoxyadenosine + formate + L-methionine + 3 H(+). It functions in the pathway cofactor biosynthesis; thiamine diphosphate biosynthesis. Functionally, catalyzes the synthesis of the hydroxymethylpyrimidine phosphate (HMP-P) moiety of thiamine from aminoimidazole ribotide (AIR) in a radical S-adenosyl-L-methionine (SAM)-dependent reaction. This is Phosphomethylpyrimidine synthase from Baumannia cicadellinicola subsp. Homalodisca coagulata.